A 61-amino-acid chain; its full sequence is Small ribosomal subunit protein bS21 (61 aa).

A disordered region spans residues 40-61 (KPSVKRKKKSEAARKRKNKRRF). A compositionally biased stretch (basic residues) spans 43 to 61 (VKRKKKSEAARKRKNKRRF).

This sequence belongs to the bacterial ribosomal protein bS21 family.

The sequence is that of Small ribosomal subunit protein bS21 from Ligilactobacillus salivarius (strain UCC118) (Lactobacillus salivarius).